The chain runs to 532 residues: Muscarinic acetylcholine receptor M5 (532 aa).

The Extracellular segment spans residues 1–29; the sequence is MEGESYHNETTVNGTPVNHQALERHGLWE. The N-linked (GlcNAc...) asparagine glycan is linked to Asn8. A helical membrane pass occupies residues 30-53; it reads VITIAAVTAVVSLMTIVGNVLVMI. The Cytoplasmic segment spans residues 54-66; the sequence is SFKVNSQLKTVNN. The chain crosses the membrane as a helical span at residues 67-87; the sequence is YYLLSLACADLIIGIFSMNLY. Residues 88-104 lie on the Extracellular side of the membrane; the sequence is TTYILMGRWVLGSLACD. A disulfide bond links Cys103 and Cys183. A helical membrane pass occupies residues 105 to 126; the sequence is LWLALDYVASNASVMNLLVISF. Residues 127–146 are Cytoplasmic-facing; that stretch reads DRYFSITRPLTYRAKRTPKR. Residues 147-169 form a helical membrane-spanning segment; sequence AGIMIGLAWLVSFILWAPAILCW. Over 170-191 the chain is Extracellular; the sequence is QYLVGKRTVPPDECQIQFLSEP. Residues 192-214 form a helical membrane-spanning segment; that stretch reads TITFGTAIAAFYIPVSVMTILYC. Residues 215 to 443 are Cytoplasmic-facing; that stretch reads RIYRETEKRT…LVKERKAAQT (229 aa). The interval 265–290 is disordered; it reads VRNQASWSSSRRSTSTTGKPTQATDL. Residues 270 to 281 show a composition bias toward low complexity; that stretch reads SWSSSRRSTSTT. Residues 444 to 464 form a helical membrane-spanning segment; that stretch reads LSAILLAFIITWTPYNIMVLV. Topologically, residues 465–478 are extracellular; that stretch reads STFCDKCVPVTLWH. The helical transmembrane segment at 479 to 498 threads the bilayer; it reads LGYWLCYVNSTINPICYALC. At 499–532 the chain is on the cytoplasmic side; that stretch reads NRTFRKTFKLLLLCRWKKKKVEEKLYWQGNSKLP. Thr501 and Thr505 each carry phosphothreonine.

The protein belongs to the G-protein coupled receptor 1 family. Muscarinic acetylcholine receptor subfamily. CHRM5 sub-subfamily.

It localises to the cell membrane. The protein localises to the postsynaptic cell membrane. Its function is as follows. The muscarinic acetylcholine receptor mediates various cellular responses, including inhibition of adenylate cyclase, breakdown of phosphoinositides and modulation of potassium channels through the action of G proteins. Primary transducing effect is Pi turnover. This is Muscarinic acetylcholine receptor M5 (Chrm5) from Mus musculus (Mouse).